The sequence spans 283 residues: Undecaprenyl-diphosphatase (283 aa).

The next 7 membrane-spanning stretches (helical) occupy residues 1–21 (MDII…FLPI), 40–60 (GAAF…IYFY), 85–105 (SRMG…GLLF), 117–137 (YIIS…EYLV), 196–216 (FSFL…LLKV), 232–252 (VATV…LDYL), and 258–278 (YLFI…LSMG).

This sequence belongs to the UppP family.

The protein resides in the cell inner membrane. It carries out the reaction di-trans,octa-cis-undecaprenyl diphosphate + H2O = di-trans,octa-cis-undecaprenyl phosphate + phosphate + H(+). Functionally, catalyzes the dephosphorylation of undecaprenyl diphosphate (UPP). Confers resistance to bacitracin. This chain is Undecaprenyl-diphosphatase, found in Chloroherpeton thalassium (strain ATCC 35110 / GB-78).